Here is a 1463-residue protein sequence, read N- to C-terminus: Nucleoporin NUP152 (1463 aa).

3 disordered regions span residues 1–199 (MDPP…GRPG), 339–568 (GIPD…ELPA), and 609–1064 (TTKK…FGNT). Polar residues-rich tracts occupy residues 32 to 42 (STNSNSVTANA), 81 to 92 (GPSSKLSQSVSA), 144 to 155 (TSSKATSFSGAP), 175 to 191 (TTYTQRVSSHPLTQSFP), 367 to 378 (PSSSTFTHTASP), and 416 to 472 (PAKT…SSNI). Over residues 481 to 498 (KDEDNESDTGSEAEAEDE) the composition is skewed to acidic residues. 2 stretches are compositionally biased toward low complexity: residues 511 to 523 (GASSSAPSEGGES) and 616 to 630 (AAAPAEAPKEATPTT). Composition is skewed to polar residues over residues 651-664 (IFGSTTNPTETSIP), 673-689 (PATSTTNSLFGATTSAA), and 720-746 (TTESPKTNLFQFGTPNKTETAPATQPQ). An FXFG 1 repeat occupies 729–732 (FQFG). The span at 753–768 (KPPSTETPTEKPATTS) shows a compositional bias: low complexity. Positions 777–789 (PATTSSLFGSATT) are enriched in polar residues. Low complexity predominate over residues 803 to 813 (TTTPADKPTTT). Residues 814-828 (NLFGSTSTQATSGSD) show a composition bias toward polar residues. The stretch at 835–838 (FAFG) is one FXFG 2 repeat. Over residues 840 to 863 (TTESKPTTSLFGSTTPAPATSTEN) the composition is skewed to polar residues. Over residues 870–881 (ATTTSATPATNT) the composition is skewed to low complexity. 5 stretches are compositionally biased toward polar residues: residues 900–923 (GSSTTTAAPVFQFGSTPASTSTEQ), 940–961 (GSTSATSTEQKPLFGSSTTMTE), 968–987 (SISTTATEQKPLFGSTSTTE), 998–1029 (STEQKSLFGITPSTTENNPASIFGNSSTSTEQ), and 1037–1055 (PASTEQKPLFGSTPSTTEN). One copy of the FXFG 3 repeat lies at 910–913 (FQFG). FXFG repeat units lie at residues 1074 to 1077 (FNFG), 1127 to 1130 (FNFG), 1141 to 1144 (FTFG), and 1152 to 1155 (FTFG). Disordered regions lie at residues 1155 to 1174 (GASSDSSNASNNASSAPIFS) and 1179 to 1217 (QPSSTPLFGQNNPPAASNIFASSLAPVGGTSTGTSKHVP). Residues 1156–1170 (ASSDSSNASNNASSA) show a composition bias toward low complexity. An FXFG 8 repeat occupies 1173-1176 (FSFG). Polar residues predominate over residues 1179-1199 (QPSSTPLFGQNNPPAASNIFA). Residues 1236-1239 (FTFG) form an FXFG 9 repeat. Residues 1240–1271 (GASSLATTPAASTPEPSAANAAAAGEDQGASA) show a composition bias toward low complexity. 2 disordered regions span residues 1240–1335 (GASS…PWKV) and 1416–1463 (AALE…DEKK). Residues 1289 to 1427 (GEEDESVVHE…LEEHKKANEK (139 aa)) form the RanBD1 domain. Residues 1418 to 1463 (LEEHKKANEKKDGEKNEESEKKDEKQEEKKNEEKKDEKEEKKDEKK) are compositionally biased toward basic and acidic residues.

In terms of assembly, the nuclear pore complex (NPC) constitutes the exclusive means of nucleocytoplasmic transport. NPCs allow the passive diffusion of ions and small molecules and the active, nuclear transport receptor-mediated bidirectional transport of macromolecules such as proteins, RNAs, ribonucleoparticles (RNPs), and ribosomal subunits across the nuclear envelope. The 55-60 MDa NPC is composed of at least 28 different subunits: AMO1, ELYS, GLE1, GLE2, MLP1, NDC1, NIC96, NSP1, NUP133, NUP145, NUP152, NUP159, NUP170, NUP188, NUP192, NUP37, NUP49, NUP53, NUP56, NUP57, NUP82, NUP84, NUP85, POM152, POM33, POM34, SEC13 and SEH1. Due to its 8-fold rotational symmetry, all subunits are present with 8 copies or multiples thereof.

Its subcellular location is the nucleus. The protein localises to the nuclear pore complex. The protein resides in the nucleus membrane. Functionally, functions as a component of the nuclear pore complex (NPC). NPC components, collectively referred to as nucleoporins (NUPs), can play the role of both NPC structural components and of docking or interaction partners for transiently associated nuclear transport factors. Active directional transport is assured by both, a Phe-Gly (FG) repeat affinity gradient for these transport factors across the NPC and a transport cofactor concentration gradient across the nuclear envelope (GSP1 and GSP2 GTPases associated predominantly with GTP in the nucleus, with GDP in the cytoplasm). This is Nucleoporin NUP152 (NUP152) from Chaetomium thermophilum (strain DSM 1495 / CBS 144.50 / IMI 039719) (Thermochaetoides thermophila).